A 334-amino-acid chain; its full sequence is DNA-directed RNA polymerase subunit alpha (334 aa).

The tract at residues 1-233 (MADQTISNVL…NLFTPLVSQE (233 aa)) is alpha N-terminal domain (alpha-NTD). The tract at residues 263–334 (DNENSYNLYN…QLKKRFKIQL (72 aa)) is alpha C-terminal domain (alpha-CTD).

This sequence belongs to the RNA polymerase alpha chain family. As to quaternary structure, in plastids the minimal PEP RNA polymerase catalytic core is composed of four subunits: alpha, beta, beta', and beta''. When a (nuclear-encoded) sigma factor is associated with the core the holoenzyme is formed, which can initiate transcription.

It localises to the plastid. The protein resides in the chloroplast. It catalyses the reaction RNA(n) + a ribonucleoside 5'-triphosphate = RNA(n+1) + diphosphate. In terms of biological role, DNA-dependent RNA polymerase catalyzes the transcription of DNA into RNA using the four ribonucleoside triphosphates as substrates. The sequence is that of DNA-directed RNA polymerase subunit alpha from Chaetosphaeridium globosum (Charophycean green alga).